The primary structure comprises 473 residues: Chromosomal replication initiator protein DnaA (473 aa).

The segment at M1–V87 is domain I, interacts with DnaA modulators. The tract at residues V87–T132 is domain II. The tract at residues R133–A349 is domain III, AAA+ region. ATP contacts are provided by G177, G179, K180, and T181. Residues S350–R473 are domain IV, binds dsDNA.

The protein belongs to the DnaA family. Oligomerizes as a right-handed, spiral filament on DNA at oriC.

The protein localises to the cytoplasm. Plays an essential role in the initiation and regulation of chromosomal replication. ATP-DnaA binds to the origin of replication (oriC) to initiate formation of the DNA replication initiation complex once per cell cycle. Binds the DnaA box (a 9 base pair repeat at the origin) and separates the double-stranded (ds)DNA. Forms a right-handed helical filament on oriC DNA; dsDNA binds to the exterior of the filament while single-stranded (ss)DNA is stabiized in the filament's interior. The ATP-DnaA-oriC complex binds and stabilizes one strand of the AT-rich DNA unwinding element (DUE), permitting loading of DNA polymerase. After initiation quickly degrades to an ADP-DnaA complex that is not apt for DNA replication. Binds acidic phospholipids. This is Chromosomal replication initiator protein DnaA from Leifsonia xyli subsp. xyli (strain CTCB07).